The chain runs to 550 residues: MAGLGASLHVWGWLMLGSCLLARAQLDSDGTITIEEQIVLVLKAKVQCELNITAQLQEGEGNCFPEWDGLICWPRGTVGKISAVPCPPYIYDFNHKGVAFRHCNPNGTWDFMHSLNKTWANYSDCLRFLQPDISIGKQEFFERLYVMYTVGYSISFGSLAVAILIIGYFRRLHCTRNYIHMHLFVSFMLRATSIFVKDRVVHAHIGVKELESLIMQDDPQNSIEATSVDKSQYIGCKIAVVMFIYFLATNYYWILVEGLYLHNLIFVAFFSDTKYLWGFILIGWGFPAAFVAAWAVARATLADARCWELSAGDIKWIYQAPILAAIGLNFILFLNTVRVLATKIWETNAVGHDTRKQYRKLAKSTLVLVLVFGVHYIVFVCLPHSFTGLGWEIRMHCELFFNSFQGFFVSIIYCYCNGEVQAEVKKMWSRWNLSVDWKRTPPCGSRRCGSVLTTVTHSTSSQSQVAASTRMVLISGKAAKIASRQPDSHITLPGYVWSNSEQDCLPHSFHEETKEDSGRQGDDILMEKPSRPMESNPDTEGCQGETEDVL.

A signal peptide spans 1-24; it reads MAGLGASLHVWGWLMLGSCLLARA. Residues 27–145 are Extracellular-facing; that stretch reads DSDGTITIEE…GKQEFFERLY (119 aa). Asn-51, Asn-106, Asn-116, and Asn-121 each carry an N-linked (GlcNAc...) asparagine glycan. A helical membrane pass occupies residues 146 to 169; it reads VMYTVGYSISFGSLAVAILIIGYF. Over 170-176 the chain is Cytoplasmic; sequence RRLHCTR. Residues 177–196 form a helical membrane-spanning segment; it reads NYIHMHLFVSFMLRATSIFV. Residues 197–237 are Extracellular-facing; the sequence is KDRVVHAHIGVKELESLIMQDDPQNSIEATSVDKSQYIGCK. The chain crosses the membrane as a helical span at residues 238 to 260; sequence IAVVMFIYFLATNYYWILVEGLY. Over 261–275 the chain is Cytoplasmic; it reads LHNLIFVAFFSDTKY. A helical transmembrane segment spans residues 276–297; it reads LWGFILIGWGFPAAFVAAWAVA. Residues 298-316 are Extracellular-facing; the sequence is RATLADARCWELSAGDIKW. The helical transmembrane segment at 317–337 threads the bilayer; it reads IYQAPILAAIGLNFILFLNTV. Topologically, residues 338 to 364 are cytoplasmic; that stretch reads RVLATKIWETNAVGHDTRKQYRKLAKS. The chain crosses the membrane as a helical span at residues 365-383; it reads TLVLVLVFGVHYIVFVCLP. Over 384-394 the chain is Extracellular; the sequence is HSFTGLGWEIR. Residues 395-417 traverse the membrane as a helical segment; the sequence is MHCELFFNSFQGFFVSIIYCYCN. The Cytoplasmic portion of the chain corresponds to 418–550; it reads GEVQAEVKKM…GCQGETEDVL (133 aa). The span at 511–531 shows a compositional bias: basic and acidic residues; that stretch reads EETKEDSGRQGDDILMEKPSR. The disordered stretch occupies residues 511 to 550; it reads EETKEDSGRQGDDILMEKPSRPMESNPDTEGCQGETEDVL.

The protein belongs to the G-protein coupled receptor 2 family. In terms of assembly, binds to TIPF39/TIP39. Expressed abundantly in brain and pancreas. Also expressed in the testis.

Its subcellular location is the cell membrane. In terms of biological role, this is a specific receptor for parathyroid hormone. The activity of this receptor is mediated by G proteins which activate adenylyl cyclase. PTH2R may be responsible for PTH effects in a number of physiological systems. It may play a significant role in pancreatic function. PTH2R presence in neurons indicates that it may function as a neurotransmitter receptor. The polypeptide is Parathyroid hormone 2 receptor (PTH2R) (Homo sapiens (Human)).